A 172-amino-acid polypeptide reads, in one-letter code: Centrin-1 (172 aa).

A disordered region spans residues 1–30; it reads MASSYRKPTVASTSQKRKVGPKPELTEEQK. EF-hand domains are found at residues 28 to 63, 64 to 99, 101 to 136, and 137 to 172; these read EQKQ…LGFE, PRKE…KMAE, DTKE…LGEN, and LTDE…TNLY. Ca(2+)-binding residues include D41, D43, S45, T47, and E52. Ca(2+)-binding residues include D150, D152, D154, E156, and E161.

The protein belongs to the centrin family. As to quaternary structure, monomer. Interacts with CIMAP3. Interacts with USP49.

The protein resides in the cytoplasm. The protein localises to the cytoskeleton. It is found in the microtubule organizing center. Its subcellular location is the centrosome. In terms of biological role, plays a fundamental role in microtubule-organizing center structure and function. Plays a role in sperm cilia formation. The polypeptide is Centrin-1 (CETN1) (Bos taurus (Bovine)).